We begin with the raw amino-acid sequence, 360 residues long: Lipid-A-disaccharide synthase (360 aa).

This sequence belongs to the LpxB family.

It carries out the reaction a lipid X + a UDP-2-N,3-O-bis[(3R)-3-hydroxyacyl]-alpha-D-glucosamine = a lipid A disaccharide + UDP + H(+). The protein operates within bacterial outer membrane biogenesis; LPS lipid A biosynthesis. Functionally, condensation of UDP-2,3-diacylglucosamine and 2,3-diacylglucosamine-1-phosphate to form lipid A disaccharide, a precursor of lipid A, a phosphorylated glycolipid that anchors the lipopolysaccharide to the outer membrane of the cell. This Helicobacter pylori (strain P12) protein is Lipid-A-disaccharide synthase.